The primary structure comprises 286 residues: Type II restriction enzyme NgoMIV (286 aa).

2 residues coordinate Mg(2+): aspartate 140 and cysteine 186.

As to quaternary structure, homotetramer. Mg(2+) serves as cofactor.

It carries out the reaction Endonucleolytic cleavage of DNA to give specific double-stranded fragments with terminal 5'-phosphates.. A P subtype restriction enzyme that recognizes the double-stranded sequence 5'-GCCGGC-3' and cleaves after G-1. This chain is Type II restriction enzyme NgoMIV (ngoMIVR), found in Neisseria gonorrhoeae.